Reading from the N-terminus, the 250-residue chain is 5-oxoprolinase subunit A 2 (250 aa).

It belongs to the LamB/PxpA family. Forms a complex composed of PxpA, PxpB and PxpC.

The enzyme catalyses 5-oxo-L-proline + ATP + 2 H2O = L-glutamate + ADP + phosphate + H(+). Its function is as follows. Catalyzes the cleavage of 5-oxoproline to form L-glutamate coupled to the hydrolysis of ATP to ADP and inorganic phosphate. The chain is 5-oxoprolinase subunit A 2 from Bordetella bronchiseptica (strain ATCC BAA-588 / NCTC 13252 / RB50) (Alcaligenes bronchisepticus).